Consider the following 311-residue polypeptide: tRNA dimethylallyltransferase (311 aa).

Residue 13-20 (GPTASGKT) participates in ATP binding. Residue 15–20 (TASGKT) coordinates substrate. 2 interaction with substrate tRNA regions span residues 38–41 (DSMQ) and 166–170 (QRVLR).

The protein belongs to the IPP transferase family. Monomer. It depends on Mg(2+) as a cofactor.

The catalysed reaction is adenosine(37) in tRNA + dimethylallyl diphosphate = N(6)-dimethylallyladenosine(37) in tRNA + diphosphate. Its function is as follows. Catalyzes the transfer of a dimethylallyl group onto the adenine at position 37 in tRNAs that read codons beginning with uridine, leading to the formation of N6-(dimethylallyl)adenosine (i(6)A). In Staphylococcus aureus (strain bovine RF122 / ET3-1), this protein is tRNA dimethylallyltransferase.